Reading from the N-terminus, the 563-residue chain is Phosphomethylpyrimidine synthase (563 aa).

Positions 95-115 (PGKNPSPMNNRTPVRAKQGKS) are disordered. Residues N200, M229, Y258, H294, 314–316 (SRG), 355–358 (DALR), and E394 each bind substrate. H398 contributes to the Zn(2+) binding site. A substrate-binding site is contributed by Y421. H462 is a Zn(2+) binding site. Residues C544, C547, and C552 each contribute to the [4Fe-4S] cluster site.

It belongs to the ThiC family. Requires [4Fe-4S] cluster as cofactor.

It catalyses the reaction 5-amino-1-(5-phospho-beta-D-ribosyl)imidazole + S-adenosyl-L-methionine = 4-amino-2-methyl-5-(phosphooxymethyl)pyrimidine + CO + 5'-deoxyadenosine + formate + L-methionine + 3 H(+). It functions in the pathway cofactor biosynthesis; thiamine diphosphate biosynthesis. Functionally, catalyzes the synthesis of the hydroxymethylpyrimidine phosphate (HMP-P) moiety of thiamine from aminoimidazole ribotide (AIR) in a radical S-adenosyl-L-methionine (SAM)-dependent reaction. This is Phosphomethylpyrimidine synthase from Chlorobium phaeobacteroides (strain BS1).